We begin with the raw amino-acid sequence, 394 residues long: Flavin-dependent monooxygenase, oxygenase subunit HsaA (394 aa).

Residues W84, 118–120 (SSY), 141–143 (WSS), R263, 346–347 (AT), and 368–369 (HA) contribute to the FMN site.

Belongs to the HpaH/HsaA monooxygenase family. Homotetramer under anaerobic conditions. HsaAB monooxygenase consists of an oxygenase component HsaA and a reductase component HsaB.

The enzyme catalyses 3-hydroxy-9,10-secoandrosta-1,3,5(10)-triene-9,17-dione + FMNH2 + O2 = 3,4-dihydroxy-9,10-secoandrosta-1,3,5(10)-triene-9,17-dione + FMN + H2O + H(+). It participates in lipid metabolism; steroid biosynthesis. In terms of biological role, catalyzes the o-hydroxylation of 3-hydroxy-9,10-secoandrosta-1,3,5(10)-triene-9,17-dione (3-HSA) to 3,4-dihydroxy-9,10-secoandrosta-1,3,5(10)-triene-9,17-dione (3,4-DHSA) in the catabolism of cholesterol. This is Flavin-dependent monooxygenase, oxygenase subunit HsaA from Mycobacterium tuberculosis (strain CDC 1551 / Oshkosh).